A 577-amino-acid polypeptide reads, in one-letter code: Proline--tRNA ligase (577 aa).

This sequence belongs to the class-II aminoacyl-tRNA synthetase family. ProS type 1 subfamily. In terms of assembly, homodimer.

It localises to the cytoplasm. It carries out the reaction tRNA(Pro) + L-proline + ATP = L-prolyl-tRNA(Pro) + AMP + diphosphate. In terms of biological role, catalyzes the attachment of proline to tRNA(Pro) in a two-step reaction: proline is first activated by ATP to form Pro-AMP and then transferred to the acceptor end of tRNA(Pro). As ProRS can inadvertently accommodate and process non-cognate amino acids such as alanine and cysteine, to avoid such errors it has two additional distinct editing activities against alanine. One activity is designated as 'pretransfer' editing and involves the tRNA(Pro)-independent hydrolysis of activated Ala-AMP. The other activity is designated 'posttransfer' editing and involves deacylation of mischarged Ala-tRNA(Pro). The misacylated Cys-tRNA(Pro) is not edited by ProRS. The polypeptide is Proline--tRNA ligase (Chlamydia abortus (strain DSM 27085 / S26/3) (Chlamydophila abortus)).